A 505-amino-acid chain; its full sequence is Maturase K (505 aa).

It belongs to the intron maturase 2 family. MatK subfamily.

The protein resides in the plastid. It localises to the chloroplast. Functionally, usually encoded in the trnK tRNA gene intron. Probably assists in splicing its own and other chloroplast group II introns. The sequence is that of Maturase K from Nuphar advena (Common spatterdock).